The chain runs to 106 residues: Iron-sulfur cluster assembly protein CyaY (106 aa).

Belongs to the frataxin family.

In terms of biological role, involved in iron-sulfur (Fe-S) cluster assembly. May act as a regulator of Fe-S biogenesis. This Escherichia coli O139:H28 (strain E24377A / ETEC) protein is Iron-sulfur cluster assembly protein CyaY.